Here is a 78-residue protein sequence, read N- to C-terminus: Large ribosomal subunit protein eL20 (78 aa).

This sequence belongs to the eukaryotic ribosomal protein eL20 family. Part of the 50S ribosomal subunit. Binds 23S rRNA.

The protein is Large ribosomal subunit protein eL20 of Pyrobaculum neutrophilum (strain DSM 2338 / JCM 9278 / NBRC 100436 / V24Sta) (Thermoproteus neutrophilus).